The sequence spans 378 residues: UDP-N-acetylglucosamine--N-acetylmuramyl-(pentapeptide) pyrophosphoryl-undecaprenol N-acetylglucosamine transferase (378 aa).

Residues 14–16, Asn-125, Arg-165, Ser-193, and Gln-293 contribute to the UDP-N-acetyl-alpha-D-glucosamine site; that span reads TGG.

Belongs to the glycosyltransferase 28 family. MurG subfamily.

Its subcellular location is the cell inner membrane. The enzyme catalyses di-trans,octa-cis-undecaprenyl diphospho-N-acetyl-alpha-D-muramoyl-L-alanyl-D-glutamyl-meso-2,6-diaminopimeloyl-D-alanyl-D-alanine + UDP-N-acetyl-alpha-D-glucosamine = di-trans,octa-cis-undecaprenyl diphospho-[N-acetyl-alpha-D-glucosaminyl-(1-&gt;4)]-N-acetyl-alpha-D-muramoyl-L-alanyl-D-glutamyl-meso-2,6-diaminopimeloyl-D-alanyl-D-alanine + UDP + H(+). It functions in the pathway cell wall biogenesis; peptidoglycan biosynthesis. Functionally, cell wall formation. Catalyzes the transfer of a GlcNAc subunit on undecaprenyl-pyrophosphoryl-MurNAc-pentapeptide (lipid intermediate I) to form undecaprenyl-pyrophosphoryl-MurNAc-(pentapeptide)GlcNAc (lipid intermediate II). In Bartonella bacilliformis (strain ATCC 35685 / KC583 / Herrer 020/F12,63), this protein is UDP-N-acetylglucosamine--N-acetylmuramyl-(pentapeptide) pyrophosphoryl-undecaprenol N-acetylglucosamine transferase.